Consider the following 278-residue polypeptide: Putative phosphoenolpyruvate synthase regulatory protein (278 aa).

158–165 (GVSRSGKT) serves as a coordination point for ADP.

The protein belongs to the pyruvate, phosphate/water dikinase regulatory protein family. PSRP subfamily.

It catalyses the reaction [pyruvate, water dikinase] + ADP = [pyruvate, water dikinase]-phosphate + AMP + H(+). The enzyme catalyses [pyruvate, water dikinase]-phosphate + phosphate + H(+) = [pyruvate, water dikinase] + diphosphate. In terms of biological role, bifunctional serine/threonine kinase and phosphorylase involved in the regulation of the phosphoenolpyruvate synthase (PEPS) by catalyzing its phosphorylation/dephosphorylation. This Acinetobacter baumannii (strain AYE) protein is Putative phosphoenolpyruvate synthase regulatory protein.